The chain runs to 319 residues: Ester hydrolase C11orf54 homolog (319 aa).

His-270, His-272, and His-282 together coordinate Zn(2+).

Monomer. Zn(2+) is required as a cofactor.

Its subcellular location is the nucleus. The protein localises to the cytoplasm. Functionally, exhibits ester hydrolase activity on the substrate p-nitrophenyl acetate, in vitro. May regulate DNA damage and repair by regulating HIF1A degradation via chaperone-mediated autophagy (CMA). In Danio rerio (Zebrafish), this protein is Ester hydrolase C11orf54 homolog.